A 204-amino-acid polypeptide reads, in one-letter code: MFKRIRRVLVLAVFLFAGYKAYRVHQDVKQVMTYQPMVREILSEQDTPANEELVLAMIYTETKGKEGDVMQSSESASGSTNTINDNASSIRQGIQTLTGNLYLAQKKGVDIWTAVQAYNFGPAYIDFIAQNGKENTLALAKQYSRETVAPLLGNRTGKTYSYIHPISIFHGAELYVNGGNYYYSRQVRLNLYIIKCFTLFSTSG.

The protein resides in the cell surface. The protein is Pneumococcal vaccine antigen A (pvaA) of Streptococcus pneumoniae serotype 4 (strain ATCC BAA-334 / TIGR4).